The sequence spans 675 residues: Putative elongation factor TypA-like SVR3, chloroplastic (675 aa).

The N-terminal 58 residues, 1 to 58 (MELSLSTSSASPAVLRRQASPLLHKQQVLGVSFASALKPGGGALRFPSRRPLPRPITC), are a transit peptide targeting the chloroplast. The tract at residues 43 to 76 (ALRFPSRRPLPRPITCSASPSTAEPASEVKKKQL) is disordered. Low complexity predominate over residues 59 to 68 (SASPSTAEPA). Residues 80–275 (DNVRNIAIVA…AIIRCVPGPN (196 aa)) enclose the tr-type G domain.

This sequence belongs to the TRAFAC class translation factor GTPase superfamily. Classic translation factor GTPase family. BipA subfamily.

Its subcellular location is the plastid. The protein localises to the chloroplast. Functionally, putative chloroplastic elongation factor involved in response to chilling stress. Required for proper chloroplast rRNA processing and/or translation at low temperature. Involved in plastid protein homeostasis. This Arabidopsis thaliana (Mouse-ear cress) protein is Putative elongation factor TypA-like SVR3, chloroplastic (SVR3).